The chain runs to 300 residues: uncharacterized protein (300 aa).

The disordered stretch occupies residues L230–R251. A compositionally biased stretch (low complexity) spans R231–R251.

This is an uncharacterized protein from Acanthamoeba polyphaga (Amoeba).